The primary structure comprises 493 residues: E3 ubiquitin-protein ligase TRIM35 (493 aa).

At M1 the chain carries N-acetylmethionine. Phosphoserine occurs at positions 4 and 8. An RING-type zinc finger spans residues C21–K61. The B box-type zinc finger occupies R96–V137. Residues C101, H104, C123, and H129 each contribute to the Zn(2+) site. The stretch at A210–S251 forms a coiled coil. One can recognise a B30.2/SPRY domain in the interval L284–V487.

The protein belongs to the TRIM/RBCC family. In terms of assembly, interacts with PKM isoform M2, but not isoform M1; this interaction may compete with that between PKM and FGFR1, and hence reduces FGFR1-dependent tyrosine phosphorylation of PKM. Interacts with IRF7; this interaction promotes IRF7 proteasomal degradation. Interacts with TRAF3; this interaction promotes TRAF3 activation.

It localises to the cytoplasm. The protein resides in the nucleus. The enzyme catalyses S-ubiquitinyl-[E2 ubiquitin-conjugating enzyme]-L-cysteine + [acceptor protein]-L-lysine = [E2 ubiquitin-conjugating enzyme]-L-cysteine + N(6)-ubiquitinyl-[acceptor protein]-L-lysine.. The protein operates within protein modification; protein ubiquitination. Functionally, E3 ubiquitin-protein ligase that participates in multiple biological processes including cell death, glucose metabolism, and in particular, the innate immune response. Mediates 'Lys-63'-linked polyubiquitination of TRAF3 thereby promoting type I interferon production via RIG-I signaling pathway. Can also catalyze 'Lys-48'-linked polyubiquitination and proteasomal degradation of viral proteins such as influenza virus PB2. Acts as a negative feedback regulator of TLR7- and TLR9-triggered signaling. Mechanistically, promotes the 'Lys-48'-linked ubiquitination of IRF7 and induces its degradation via a proteasome-dependent pathway. Reduces FGFR1-dependent tyrosine phosphorylation of PKM, inhibiting PKM-dependent lactate production, glucose metabolism, and cell growth. The protein is E3 ubiquitin-protein ligase TRIM35 (TRIM35) of Homo sapiens (Human).